Reading from the N-terminus, the 264-residue chain is Apolipoprotein A-I (264 aa).

Residues M1–A18 form the signal peptide. A run of 2 repeats spans residues L67 to G88 and P89 to N110. Residues L67–Q264 are 10 X approximate tandem repeats. M109 is subject to Methionine sulfoxide. A 3; half-length repeat occupies K111–Q121. 5 repeat units span residues P122–E143, P144–T165, P166–T187, P188–S207, and P208–K229. Residue M193 is modified to Methionine sulfoxide. The stretch at P230–M240 is one 9; half-length repeat. The residue at position 240 (M240) is a Methionine sulfoxide. Repeat unit 10 spans residues P241–Q264.

Belongs to the apolipoprotein A1/A4/E family. As to quaternary structure, homodimer. Interacts with APOA1BP and CLU. Component of a sperm activating protein complex (SPAP), consisting of APOA1, an immunoglobulin heavy chain, an immunoglobulin light chain and albumin. Interacts with NDRG1. Interacts with SCGB3A2. Interacts with NAXE and YJEFN3. Post-translationally, glycosylated. Palmitoylated. In terms of processing, phosphorylation sites are present in the extracellular medium. Major protein of plasma HDL, also found in chylomicrons.

Its subcellular location is the secreted. In terms of biological role, participates in the reverse transport of cholesterol from tissues to the liver for excretion by promoting cholesterol efflux from tissues and by acting as a cofactor for the lecithin cholesterol acyltransferase (LCAT). As part of the SPAP complex, activates spermatozoa motility. The polypeptide is Apolipoprotein A-I (APOAI) (Mesocricetus auratus (Golden hamster)).